Reading from the N-terminus, the 473-residue chain is Cysteine--tRNA ligase (473 aa).

Cysteine 30 is a Zn(2+) binding site. Residues methionine 32–histidine 42 carry the 'HIGH' region motif. Residues cysteine 213, histidine 238, and glutamate 242 each coordinate Zn(2+). The 'KMSKS' region signature appears at lysine 270–serine 274. Lysine 273 lines the ATP pocket.

This sequence belongs to the class-I aminoacyl-tRNA synthetase family. Monomer. It depends on Zn(2+) as a cofactor.

The protein localises to the cytoplasm. The catalysed reaction is tRNA(Cys) + L-cysteine + ATP = L-cysteinyl-tRNA(Cys) + AMP + diphosphate. This is Cysteine--tRNA ligase from Acinetobacter baylyi (strain ATCC 33305 / BD413 / ADP1).